The primary structure comprises 201 residues: ATP-dependent Clp protease proteolytic subunit (201 aa).

Ser-98 functions as the Nucleophile in the catalytic mechanism. His-123 is an active-site residue.

The protein belongs to the peptidase S14 family. As to quaternary structure, fourteen ClpP subunits assemble into 2 heptameric rings which stack back to back to give a disk-like structure with a central cavity, resembling the structure of eukaryotic proteasomes.

The protein localises to the cytoplasm. The catalysed reaction is Hydrolysis of proteins to small peptides in the presence of ATP and magnesium. alpha-casein is the usual test substrate. In the absence of ATP, only oligopeptides shorter than five residues are hydrolyzed (such as succinyl-Leu-Tyr-|-NHMec, and Leu-Tyr-Leu-|-Tyr-Trp, in which cleavage of the -Tyr-|-Leu- and -Tyr-|-Trp bonds also occurs).. Cleaves peptides in various proteins in a process that requires ATP hydrolysis. Has a chymotrypsin-like activity. Plays a major role in the degradation of misfolded proteins. The sequence is that of ATP-dependent Clp protease proteolytic subunit from Rickettsia conorii (strain ATCC VR-613 / Malish 7).